We begin with the raw amino-acid sequence, 335 residues long: Large ribosomal subunit protein uL10 (335 aa).

The interval 306–335 is disordered; that stretch reads VEETVEEEEEEEEEEDAEEEAAAGLGALFG. A compositionally biased stretch (acidic residues) spans 308 to 326; it reads ETVEEEEEEEEEEDAEEEA.

It belongs to the universal ribosomal protein uL10 family. Part of the 50S ribosomal subunit. Forms part of the ribosomal stalk which helps the ribosome interact with GTP-bound translation factors. Forms a heptameric L10(L12)2(L12)2(L12)2 complex, where L10 forms an elongated spine to which the L12 dimers bind in a sequential fashion.

Forms part of the ribosomal stalk, playing a central role in the interaction of the ribosome with GTP-bound translation factors. This is Large ribosomal subunit protein uL10 from Methanobrevibacter smithii (strain ATCC 35061 / DSM 861 / OCM 144 / PS).